We begin with the raw amino-acid sequence, 417 residues long: Pigment epithelium-derived factor (417 aa).

An N-terminal signal peptide occupies residues 1 to 19; it reads MQALVLLLWTGALLGHGSS. A disordered region spans residues 17–41; it reads GSSQNVPSSSEGSPVPDSTGEPVEE. Residues 18-28 show a composition bias toward polar residues; sequence SSQNVPSSSEG. A Pyrrolidone carboxylic acid modification is found at Q20. A Phosphoserine modification is found at S24. The N-linked (GlcNAc...) asparagine glycan is linked to N284.

This sequence belongs to the serpin family. As to quaternary structure, interacts with PNPLA2; this interaction stimulates the phospholipase A2 activity of PNPLA2. In terms of tissue distribution, highly expressed in the liver, gastric glandular mucosa and renal tubules. It is also expressed in the brain, heart, lung retina and testes.

Its subcellular location is the secreted. It localises to the melanosome. In terms of biological role, neurotrophic protein; induces extensive neuronal differentiation in retinoblastoma cells. Potent inhibitor of angiogenesis. As it does not undergo the S (stressed) to R (relaxed) conformational transition characteristic of active serpins, it exhibits no serine protease inhibitory activity. The chain is Pigment epithelium-derived factor (Serpinf1) from Mus musculus (Mouse).